Here is a 180-residue protein sequence, read N- to C-terminus: Oligoribonuclease (180 aa).

An Exonuclease domain is found at 7–170 (LIWIDLEMTG…DDIRDSINEL (164 aa)). The active site involves tyrosine 128.

This sequence belongs to the oligoribonuclease family.

Its subcellular location is the cytoplasm. Its function is as follows. 3'-to-5' exoribonuclease specific for small oligoribonucleotides. The sequence is that of Oligoribonuclease from Marinobacter nauticus (strain ATCC 700491 / DSM 11845 / VT8) (Marinobacter aquaeolei).